A 343-amino-acid polypeptide reads, in one-letter code: Stimulator of interferon genes protein homolog (343 aa).

N84 carries N-linked (GlcNAc...) asparagine glycosylation. The next 2 helical transmembrane spans lie at 87-107 (IYLIVGFLLVAFFRISVTGNY) and 109-129 (NVMPTTLFLFQMPLYWIWSFT). N157 contacts 3',2'-cGAMP. A glycan (N-linked (GlcNAc...) asparagine) is linked at N187. A helical transmembrane segment spans residues 195–215 (LVILIPDEMFVNGVLESHLLD). 3',2'-cGAMP-binding residues include R232, K235, E255, T258, and S262. Residues N270 and N333 are each glycosylated (N-linked (GlcNAc...) asparagine).

The protein belongs to the STING family.

It is found in the endoplasmic reticulum membrane. In terms of biological role, facilitator of innate immune signaling that binds cyclic dinucleotides produced in response to infection by bacteria and/or viruses, and promotes the activation of the NF-kappa-B transcription factor Rel (Relish). Recognizes and binds cyclic di-GMP (c-di-GMP), a cyclic dinucleotide messenger produced by bacteria such as L.monocytogenes, leading to activation of the peptidoglycan recognition protein (IMD) signaling pathway and activation of Rel (Relish). Innate immune response is triggered in response to double-stranded RNA from viruses delivered to the cytoplasm: Sting acts by specifically binding cyclic dinucleotides 3',2'-cGAMP and 2',3'-cGAMP produced by cGlr1 and cGlr2 in response to RNA virus in the cytosol. Has a strong preference for 3',2'-cGAMP compared to other cyclic dinucleotides such as 2',3'-cGAMP or 3'3'-c-di-GMP. Upon binding to 3',2'-cGAMP, activates an antiviral immune response, leading to the activation of Rel (Relish). Activated in brain in response to Zika virus infection, leading to autophagy. The sequence is that of Stimulator of interferon genes protein homolog from Drosophila melanogaster (Fruit fly).